We begin with the raw amino-acid sequence, 202 residues long: ATP-dependent Clp protease proteolytic subunit (202 aa).

Ser-106 (nucleophile) is an active-site residue. Residue His-131 is part of the active site.

It belongs to the peptidase S14 family. Fourteen ClpP subunits assemble into 2 heptameric rings which stack back to back to give a disk-like structure with a central cavity, resembling the structure of eukaryotic proteasomes.

It localises to the cytoplasm. The enzyme catalyses Hydrolysis of proteins to small peptides in the presence of ATP and magnesium. alpha-casein is the usual test substrate. In the absence of ATP, only oligopeptides shorter than five residues are hydrolyzed (such as succinyl-Leu-Tyr-|-NHMec, and Leu-Tyr-Leu-|-Tyr-Trp, in which cleavage of the -Tyr-|-Leu- and -Tyr-|-Trp bonds also occurs).. Its function is as follows. Cleaves peptides in various proteins in a process that requires ATP hydrolysis. Has a chymotrypsin-like activity. Plays a major role in the degradation of misfolded proteins. The chain is ATP-dependent Clp protease proteolytic subunit from Albidiferax ferrireducens (strain ATCC BAA-621 / DSM 15236 / T118) (Rhodoferax ferrireducens).